We begin with the raw amino-acid sequence, 216 residues long: Holliday junction branch migration complex subunit RuvA (216 aa).

Positions 1–64 (MISFIKGVLI…EDAQQLYGFK (64 aa)) are domain I. The interval 65–143 (SKVDKKVFQE…KMANEIYAQT (79 aa)) is domain II. A flexible linker region spans residues 144-163 (SGTTTTSQDSQAQQAPTSVV). The interval 164-216 (LANSIFNESVDALLALGYKQKDAEKMARSAMGDATTAAEVIRKALQGSIKSKG) is domain III.

Belongs to the RuvA family. As to quaternary structure, homotetramer. Forms an RuvA(8)-RuvB(12)-Holliday junction (HJ) complex. HJ DNA is sandwiched between 2 RuvA tetramers; dsDNA enters through RuvA and exits via RuvB. An RuvB hexamer assembles on each DNA strand where it exits the tetramer. Each RuvB hexamer is contacted by two RuvA subunits (via domain III) on 2 adjacent RuvB subunits; this complex drives branch migration. In the full resolvosome a probable DNA-RuvA(4)-RuvB(12)-RuvC(2) complex forms which resolves the HJ.

The protein resides in the cytoplasm. The RuvA-RuvB-RuvC complex processes Holliday junction (HJ) DNA during genetic recombination and DNA repair, while the RuvA-RuvB complex plays an important role in the rescue of blocked DNA replication forks via replication fork reversal (RFR). RuvA specifically binds to HJ cruciform DNA, conferring on it an open structure. The RuvB hexamer acts as an ATP-dependent pump, pulling dsDNA into and through the RuvAB complex. HJ branch migration allows RuvC to scan DNA until it finds its consensus sequence, where it cleaves and resolves the cruciform DNA. This Francisella tularensis subsp. holarctica (strain FTNF002-00 / FTA) protein is Holliday junction branch migration complex subunit RuvA.